Here is a 136-residue protein sequence, read N- to C-terminus: Psoriasis susceptibility 1 candidate gene 2 protein homolog (136 aa).

An N-terminal signal peptide occupies residues 1–22; that stretch reads MILNWKLLGILVLCLHTRGISG. The interval 20–136 is disordered; the sequence is ISGSEDHPSH…DLDPPREEYR (117 aa). Residues 23–33 are compositionally biased toward basic and acidic residues; the sequence is SEDHPSHPPAE. 2 stretches are compositionally biased toward pro residues: residues 44–74 and 83–116; these read PQGPPVPGDPWPGAPPLFEDPPPPHPSPPWR and PPEPPRTDPPQPPRPDDPWPAGPQPPENPWPPAP. Over residues 117–136 the composition is skewed to basic and acidic residues; it reads EVDHRPQEEPDLDPPREEYR.

The protein resides in the secreted. This is Psoriasis susceptibility 1 candidate gene 2 protein homolog (PSORS1C2) from Pan troglodytes (Chimpanzee).